The chain runs to 325 residues: 4-diphosphocytidyl-2-C-methyl-D-erythritol kinase (325 aa).

Lys22 is an active-site residue. An ATP-binding site is contributed by 110–120 (PVAGGMAGGSA). The active site involves Asp152. A disordered region spans residues 306–325 (PAPGARVLEAVSTPSPGGRS).

Belongs to the GHMP kinase family. IspE subfamily.

It carries out the reaction 4-CDP-2-C-methyl-D-erythritol + ATP = 4-CDP-2-C-methyl-D-erythritol 2-phosphate + ADP + H(+). It functions in the pathway isoprenoid biosynthesis; isopentenyl diphosphate biosynthesis via DXP pathway; isopentenyl diphosphate from 1-deoxy-D-xylulose 5-phosphate: step 3/6. Catalyzes the phosphorylation of the position 2 hydroxy group of 4-diphosphocytidyl-2C-methyl-D-erythritol. The sequence is that of 4-diphosphocytidyl-2-C-methyl-D-erythritol kinase from Kineococcus radiotolerans (strain ATCC BAA-149 / DSM 14245 / SRS30216).